A 204-amino-acid polypeptide reads, in one-letter code: V-set and transmembrane domain-containing protein 2-like protein (204 aa).

The first 24 residues, methionine 1–alanine 24, serve as a signal peptide directing secretion. Residues alanine 41–lysine 158 enclose the Ig-like domain. An intrachain disulfide couples cysteine 62 to cysteine 142. Residues asparagine 168 to leucine 204 form a disordered region. The segment covering glutamate 175 to lysine 187 has biased composition (pro residues). Residues proline 188–aspartate 198 show a composition bias toward basic and acidic residues.

This chain is V-set and transmembrane domain-containing protein 2-like protein (VSTM2L), found in Homo sapiens (Human).